The chain runs to 379 residues: Probable purine permease 11 (379 aa).

Helical transmembrane passes span 43–63 (WVLV…SVLL), 76–96 (WMAT…LLLL), 114–134 (IVLI…LYSV), 144–164 (YSLI…FINA), 167–187 (FTAL…LIAL), 203–223 (IVGF…LSLM), 239–259 (VLEM…IGLF), 294–313 (VCSV…FSNV), 314–330 (ISTL…LVVF), and 334–354 (MSGV…SYVY).

The protein belongs to the purine permeases (TC 2.A.7.14) family. As to quaternary structure, may form a complex with the potassium channel subunit KAT1.

It is found in the membrane. This chain is Probable purine permease 11 (PUP11), found in Arabidopsis thaliana (Mouse-ear cress).